The chain runs to 91 residues: MPLHKSAEKRLRQAARRNERNRARKKELKGLLKNMQKLIDANAAKSEVESAYRAAVQKLDRLGVKRYIHANKASRKKAQLTKMLNSYTPQA.

The span at 1-21 (MPLHKSAEKRLRQAARRNERN) shows a compositional bias: basic and acidic residues. Residues 1 to 24 (MPLHKSAEKRLRQAARRNERNRAR) form a disordered region.

This sequence belongs to the bacterial ribosomal protein bS20 family.

In terms of biological role, binds directly to 16S ribosomal RNA. The sequence is that of Small ribosomal subunit protein bS20 from Chlorobaculum parvum (strain DSM 263 / NCIMB 8327) (Chlorobium vibrioforme subsp. thiosulfatophilum).